The primary structure comprises 557 residues: MPDNKRSQHITQGVARSPNRSMYYALGYKKEDFSNPMIGVANGHSTITPCNSGLQKLADAAVAAVKASNANPQIFGTPTISDGMSMGTEGMKYSLISREVIADCIETCAQGQWMDGVVVIGGCDKNMPGGMIALARTNVPGIYVYGGTIKPGNWKGKDLTIVSSFEAVGEFTAGRMSEEDFEGVERNACPTSGSCGGMYTANTMSSSFEALGMSLLYSSTMANPDQEKVDSAAESARVLVEAVRRDLKPRDIITRKSIENAVAVIMATGGSTNAVLHYLAIAHAAGVEWTIDDFERVRQRVPVICNLKPSGQYVATDLHKAGGIPQVMKILLNAGLLHGDCVTITGKTLAEELANVPDQPRADQDVILPIERALYQQGHLAILKGNLAEEGAVAKITGLKNPVISGPARVFDDEQSAMTAILADQIKAGDVLVLRYLGPKGGPGMPEMLAPTSAIIGKGLGESVGFVTDGRFSGGTWGMVVGHVAPEAFVGGTIALVQEGDSITIDAHQRLLQLNVPEDELARRRAAWKQPAPRYTRGVLAKFAQLTSTASKGAVTD.

Cys-50 serves as a coordination point for [2Fe-2S] cluster. Residue Asp-82 coordinates Mg(2+). Position 123 (Cys-123) interacts with [2Fe-2S] cluster. Positions 124 and 125 each coordinate Mg(2+). Lys-125 carries the post-translational modification N6-carboxylysine. Cys-195 provides a ligand contact to [2Fe-2S] cluster. A Mg(2+)-binding site is contributed by Glu-447. Ser-473 functions as the Proton acceptor in the catalytic mechanism.

Belongs to the IlvD/Edd family. In terms of assembly, homodimer. [2Fe-2S] cluster is required as a cofactor. The cofactor is Mg(2+).

The enzyme catalyses (2R)-2,3-dihydroxy-3-methylbutanoate = 3-methyl-2-oxobutanoate + H2O. The catalysed reaction is (2R,3R)-2,3-dihydroxy-3-methylpentanoate = (S)-3-methyl-2-oxopentanoate + H2O. The protein operates within amino-acid biosynthesis; L-isoleucine biosynthesis; L-isoleucine from 2-oxobutanoate: step 3/4. It functions in the pathway amino-acid biosynthesis; L-valine biosynthesis; L-valine from pyruvate: step 3/4. Its function is as follows. Functions in the biosynthesis of branched-chain amino acids. Catalyzes the dehydration of (2R,3R)-2,3-dihydroxy-3-methylpentanoate (2,3-dihydroxy-3-methylvalerate) into 2-oxo-3-methylpentanoate (2-oxo-3-methylvalerate) and of (2R)-2,3-dihydroxy-3-methylbutanoate (2,3-dihydroxyisovalerate) into 2-oxo-3-methylbutanoate (2-oxoisovalerate), the penultimate precursor to L-isoleucine and L-valine, respectively. This is Dihydroxy-acid dehydratase from Ralstonia nicotianae (strain ATCC BAA-1114 / GMI1000) (Ralstonia solanacearum).